A 347-amino-acid chain; its full sequence is Ubiquitin thioesterase Otu1 (347 aa).

The 83-residue stretch at Phe5–Ala87 folds into the Ubiquitin-like domain. The UBX-like stretch occupies residues Lys8–Ala89. Residues Leu150–Glu274 form the OTU domain. Residues Val155–Cys161 are cys-loop. The active site involves Asp158. Residue Cys161 is the Nucleophile of the active site. Residues Ile213–Ile223 form a variable-loop region. Residues Phe263 to His267 form a his-loop region. Substrate is bound at residue Ile266. The active site involves His267. The S2 site stretch occupies residues Leu290 to Gln295. The C2H2-type zinc finger occupies Leu317–His341. The active site involves His341.

The enzyme catalyses Thiol-dependent hydrolysis of ester, thioester, amide, peptide and isopeptide bonds formed by the C-terminal Gly of ubiquitin (a 76-residue protein attached to proteins as an intracellular targeting signal).. Its function is as follows. Hydrolase that can remove conjugated ubiquitin from proteins and may therefore play an important regulatory role at the level of protein turnover by preventing degradation. Involved in the regulation of DNA damage repair. The chain is Ubiquitin thioesterase Otu1 from Drosophila melanogaster (Fruit fly).